The chain runs to 356 residues: Transcription factor MafB (356 aa).

Disordered regions lie at residues 49-79 (RLQP…PTEQ) and 140-240 (YRGA…LNVE). Residues 55 to 77 (SVSSTPISTPCSSVPSSPSFSPT) are compositionally biased toward low complexity. Composition is skewed to basic residues over residues 183–196 (AHGH…HHHH) and 212–223 (HHRHHHHHHPHG). A basic motif region spans residues 270–295 (RLKQKRRTLKNRGYAQSCRFKRVQQK). The bZIP domain maps to 270 to 333 (RLKQKRRTLK…DAYKLKCEKL (64 aa)). The tract at residues 298 to 319 (LENEKTQLINQVEQLKQEINRL) is leucine-zipper.

This sequence belongs to the bZIP family. Maf subfamily. Homodimer or heterodimer with other bHLH-Zip transcription factors. Binds DNA as a homodimer or a heterodimer.

It is found in the nucleus. Its function is as follows. May act as a transcriptional activator or repressor. Involved in neurogenesis. Involved in the development of rhombomeres (r) 5 and 6 segments from their common precursor 'proto-segment' in the hindbrain. In Danio rerio (Zebrafish), this protein is Transcription factor MafB (mafb).